A 219-amino-acid polypeptide reads, in one-letter code: GTP-binding protein Rit1 (219 aa).

GTP is bound by residues 28-35 (GAGGVGKS), 75-79 (DTAGQ), and 134-137 (NKSD).

It belongs to the small GTPase superfamily. Ras family. Interacts with AFDN, the C-terminal domain of RALGDS and RLF, but not with RIN1 and PIK3CA. RLF binds exclusively to the active GTP-bound form. Strongly interacts with BRAF, but only weakly with RAF1. BARF and RAF1 association is dependent upon the GTP-bound state. Interacts with RGL3. As to expression, expressed in many tissues.

Its subcellular location is the cell membrane. The catalysed reaction is GTP + H2O = GDP + phosphate + H(+). With respect to regulation, alternates between an inactive form bound to GDP and an active form bound to GTP. Its function is as follows. Plays a crucial role in coupling NGF stimulation to the activation of both EPHB2 and MAPK14 signaling pathways and in NGF-dependent neuronal differentiation. Involved in ELK1 transactivation through the Ras-MAPK signaling cascade that mediates a wide variety of cellular functions, including cell proliferation, survival, and differentiation. The polypeptide is GTP-binding protein Rit1 (Rit1) (Mus musculus (Mouse)).